Consider the following 359-residue polypeptide: Membrane-bound lytic murein transglycosylase C (359 aa).

Residues 1-16 form the signal peptide; that stretch reads MKKYLALALIAPLLIS. Cys17 carries N-palmitoyl cysteine lipidation. The S-diacylglycerol cysteine moiety is linked to residue Cys17.

This sequence belongs to the transglycosylase Slt family.

The protein localises to the cell outer membrane. It carries out the reaction Exolytic cleavage of the (1-&gt;4)-beta-glycosidic linkage between N-acetylmuramic acid (MurNAc) and N-acetylglucosamine (GlcNAc) residues in peptidoglycan, from either the reducing or the non-reducing ends of the peptidoglycan chains, with concomitant formation of a 1,6-anhydrobond in the MurNAc residue.. Murein-degrading enzyme. May play a role in recycling of muropeptides during cell elongation and/or cell division. In Escherichia coli (strain SE11), this protein is Membrane-bound lytic murein transglycosylase C.